Reading from the N-terminus, the 60-residue chain is UPF0509 protein ESA_01586 (60 aa).

It belongs to the UPF0509 family.

The polypeptide is UPF0509 protein ESA_01586 (Cronobacter sakazakii (strain ATCC BAA-894) (Enterobacter sakazakii)).